Consider the following 582-residue polypeptide: MTIEKDESTWATFKRLWPHISLYKAGLGVAVVALVINALSDTYMISLLKPLLDEGFGSADSDFLKKMPFIILAMMFIRGLSGFVSGYCMSWVASNVVMRIRRQIFNHFMHMPVSYFDQESTGRLLSRITYDSEQVAAATSKALVNIVRESASIIGLLGLMFWNSWQLSLVLVVIAPVVAFAISNVSKRFRKISKNMQTAMGSLTATSEQMLKGHKVVLSYGGQKVESERFDNISNHMRQQNMKMVVAQGLANPIIQMIASFALVTVLYLASVDSIKETLTPGTFTVVFSAMFGLLRPLKGLTSVTSDFQRGMAACQTLFELMDMDKEKDDGTIEKDTVKGDIKVDNVTFTYPTADGPALRNVSFDLPAGKTIALVGRSGSGKSTIANLFTRFYDVDSGEISLDGDKIEDYRLPNLRKHFALVSQNVHLFNDTVANNIAYASEGKFTRLEIEKAAELAYASDFINKMDDGFDTMIGENGASLSGGQRQRIAIARALLQNAPVLILDEATSALDTESEKAIQSALDELQKDKTVLVIAHRLSTIEDADQILVVDEGEVVERGNHAELIAHDGAYAQLHRIQFGD.

Helical transmembrane passes span Leu16–Ile36, Phe69–Met89, Ile153–Val173, Leu250–Ala270, and Ile275–Leu295. The region spanning Val29–Arg310 is the ABC transmembrane type-1 domain. The region spanning Ile342–Ile578 is the ABC transporter domain. Gly376–Ser383 is a binding site for ATP.

Belongs to the ABC transporter superfamily. Lipid exporter (TC 3.A.1.106) family. As to quaternary structure, homodimer.

The protein resides in the cell inner membrane. It carries out the reaction ATP + H2O + lipid A-core oligosaccharideSide 1 = ADP + phosphate + lipid A-core oligosaccharideSide 2.. Involved in lipopolysaccharide (LPS) biosynthesis. Translocates lipid A-core from the inner to the outer leaflet of the inner membrane. Transmembrane domains (TMD) form a pore in the inner membrane and the ATP-binding domain (NBD) is responsible for energy generation. This is ATP-dependent lipid A-core flippase from Aliivibrio fischeri (strain ATCC 700601 / ES114) (Vibrio fischeri).